A 451-amino-acid chain; its full sequence is Histidinol dehydrogenase (451 aa).

Residues Met1 to Ala20 form a disordered region. Residues Leu7–Arg19 show a composition bias toward basic and acidic residues. Residues Tyr129, Gln193, and Asn218 each coordinate NAD(+). The substrate site is built by Thr241, Gln263, and His266. Residues Gln263 and His266 each coordinate Zn(2+). Catalysis depends on proton acceptor residues Glu332 and His333. Positions 333, 366, 420, and 425 each coordinate substrate. Asp366 contacts Zn(2+). Position 425 (His425) interacts with Zn(2+).

Belongs to the histidinol dehydrogenase family. The cofactor is Zn(2+).

It catalyses the reaction L-histidinol + 2 NAD(+) + H2O = L-histidine + 2 NADH + 3 H(+). The protein operates within amino-acid biosynthesis; L-histidine biosynthesis; L-histidine from 5-phospho-alpha-D-ribose 1-diphosphate: step 9/9. Functionally, catalyzes the sequential NAD-dependent oxidations of L-histidinol to L-histidinaldehyde and then to L-histidine. This is Histidinol dehydrogenase from Corynebacterium efficiens (strain DSM 44549 / YS-314 / AJ 12310 / JCM 11189 / NBRC 100395).